The following is a 289-amino-acid chain: tRNA pseudouridine synthase A (289 aa).

Asp-53 serves as the catalytic Nucleophile. Tyr-119 contacts substrate.

The protein belongs to the tRNA pseudouridine synthase TruA family. As to quaternary structure, homodimer.

The enzyme catalyses uridine(38/39/40) in tRNA = pseudouridine(38/39/40) in tRNA. In terms of biological role, formation of pseudouridine at positions 38, 39 and 40 in the anticodon stem and loop of transfer RNAs. The chain is tRNA pseudouridine synthase A from Corynebacterium glutamicum (strain ATCC 13032 / DSM 20300 / JCM 1318 / BCRC 11384 / CCUG 27702 / LMG 3730 / NBRC 12168 / NCIMB 10025 / NRRL B-2784 / 534).